Consider the following 254-residue polypeptide: Imidazole glycerol phosphate synthase subunit HisF (254 aa).

Active-site residues include Asp11 and Asp130.

This sequence belongs to the HisA/HisF family. In terms of assembly, heterodimer of HisH and HisF.

It is found in the cytoplasm. The catalysed reaction is 5-[(5-phospho-1-deoxy-D-ribulos-1-ylimino)methylamino]-1-(5-phospho-beta-D-ribosyl)imidazole-4-carboxamide + L-glutamine = D-erythro-1-(imidazol-4-yl)glycerol 3-phosphate + 5-amino-1-(5-phospho-beta-D-ribosyl)imidazole-4-carboxamide + L-glutamate + H(+). The protein operates within amino-acid biosynthesis; L-histidine biosynthesis; L-histidine from 5-phospho-alpha-D-ribose 1-diphosphate: step 5/9. IGPS catalyzes the conversion of PRFAR and glutamine to IGP, AICAR and glutamate. The HisF subunit catalyzes the cyclization activity that produces IGP and AICAR from PRFAR using the ammonia provided by the HisH subunit. The chain is Imidazole glycerol phosphate synthase subunit HisF from Halorhodospira halophila (strain DSM 244 / SL1) (Ectothiorhodospira halophila (strain DSM 244 / SL1)).